The sequence spans 208 residues: MPTLDEAVTTVLTPVFAAGSEIGADLALEEVSVTTAGRRQVVRVVVDRAGDEPGDLDLDAVAAASTAVSEALDESGVLGEAPYTLEVSSPGVDRPLTTPRHWSRARGRLVRAVLTDGTALLVRVVSVDEAGVHGTLEPQMVKGKPPRAKDVGAPRDLAWADLVRGEVQVEFRRPGEDVEDLVADPGADDELDELDELDELDDGDEDEQ.

The interval 175 to 208 (GEDVEDLVADPGADDELDELDELDELDDGDEDEQ) is disordered. Residues 177 to 208 (DVEDLVADPGADDELDELDELDELDDGDEDEQ) show a composition bias toward acidic residues.

It belongs to the RimP family.

It is found in the cytoplasm. Its function is as follows. Required for maturation of 30S ribosomal subunits. In Kineococcus radiotolerans (strain ATCC BAA-149 / DSM 14245 / SRS30216), this protein is Ribosome maturation factor RimP.